Reading from the N-terminus, the 930-residue chain is Isoleucine--tRNA ligase (930 aa).

A 'HIGH' region motif is present at residues 57-67; it reads PYANGNIHVGH. Glu-554 lines the L-isoleucyl-5'-AMP pocket. Residues 595-599 carry the 'KMSKS' region motif; that stretch reads KMSKS. Residue Lys-598 participates in ATP binding. Positions 888, 891, 908, and 911 each coordinate Zn(2+).

It belongs to the class-I aminoacyl-tRNA synthetase family. IleS type 1 subfamily. In terms of assembly, monomer. It depends on Zn(2+) as a cofactor.

The protein resides in the cytoplasm. The enzyme catalyses tRNA(Ile) + L-isoleucine + ATP = L-isoleucyl-tRNA(Ile) + AMP + diphosphate. Its function is as follows. Catalyzes the attachment of isoleucine to tRNA(Ile). As IleRS can inadvertently accommodate and process structurally similar amino acids such as valine, to avoid such errors it has two additional distinct tRNA(Ile)-dependent editing activities. One activity is designated as 'pretransfer' editing and involves the hydrolysis of activated Val-AMP. The other activity is designated 'posttransfer' editing and involves deacylation of mischarged Val-tRNA(Ile). The chain is Isoleucine--tRNA ligase from Streptococcus pneumoniae (strain Hungary19A-6).